The primary structure comprises 332 residues: Ketol-acid reductoisomerase (NADP(+)) 2 (332 aa).

Positions 2-182 (AELFYDADAD…GGTRAGVIRT (181 aa)) constitute a KARI N-terminal Rossmann domain. NADP(+) is bound by residues 25 to 28 (YGSQ), S51, S53, and 83 to 86 (DPIQ). The active site involves H108. An NADP(+)-binding site is contributed by G134. In terms of domain architecture, KARI C-terminal knotted spans 183–328 (TFTEETETDL…KELRKLMSWV (146 aa)). Residues D191, E195, E227, and E231 each contribute to the Mg(2+) site. S252 lines the substrate pocket.

The protein belongs to the ketol-acid reductoisomerase family. The cofactor is Mg(2+).

The enzyme catalyses (2R)-2,3-dihydroxy-3-methylbutanoate + NADP(+) = (2S)-2-acetolactate + NADPH + H(+). It carries out the reaction (2R,3R)-2,3-dihydroxy-3-methylpentanoate + NADP(+) = (S)-2-ethyl-2-hydroxy-3-oxobutanoate + NADPH + H(+). It participates in amino-acid biosynthesis; L-isoleucine biosynthesis; L-isoleucine from 2-oxobutanoate: step 2/4. The protein operates within amino-acid biosynthesis; L-valine biosynthesis; L-valine from pyruvate: step 2/4. In terms of biological role, involved in the biosynthesis of branched-chain amino acids (BCAA). Catalyzes an alkyl-migration followed by a ketol-acid reduction of (S)-2-acetolactate (S2AL) to yield (R)-2,3-dihydroxy-isovalerate. In the isomerase reaction, S2AL is rearranged via a Mg-dependent methyl migration to produce 3-hydroxy-3-methyl-2-ketobutyrate (HMKB). In the reductase reaction, this 2-ketoacid undergoes a metal-dependent reduction by NADPH to yield (R)-2,3-dihydroxy-isovalerate. This chain is Ketol-acid reductoisomerase (NADP(+)) 2, found in Streptomyces coelicolor (strain ATCC BAA-471 / A3(2) / M145).